The primary structure comprises 248 residues: Triosephosphate isomerase (248 aa).

Position 9-11 (9-11) interacts with substrate; sequence NWK. H94 functions as the Electrophile in the catalytic mechanism. Residue E166 is the Proton acceptor of the active site. Substrate contacts are provided by residues G172, S212, and 233-234; that span reads GG.

This sequence belongs to the triosephosphate isomerase family. Homodimer.

The protein resides in the cytoplasm. The enzyme catalyses D-glyceraldehyde 3-phosphate = dihydroxyacetone phosphate. Its pathway is carbohydrate biosynthesis; gluconeogenesis. The protein operates within carbohydrate degradation; glycolysis; D-glyceraldehyde 3-phosphate from glycerone phosphate: step 1/1. Functionally, involved in the gluconeogenesis. Catalyzes stereospecifically the conversion of dihydroxyacetone phosphate (DHAP) to D-glyceraldehyde-3-phosphate (G3P). The polypeptide is Triosephosphate isomerase (Clostridium botulinum (strain ATCC 19397 / Type A)).